Reading from the N-terminus, the 197-residue chain is Carbohydrate-binding X8 domain-containing protein (197 aa).

A signal peptide spans 1–19 (MAVLLPLFLLSFMFTYSNA). Low complexity predominate over residues 101 to 113 (SCLSSSSSNGTPT). The tract at residues 101–176 (SCLSSSSSNG…TSGDPNGGEE (76 aa)) is disordered. Residues 116-125 (YPSTGNSTTA) show a composition bias toward polar residues. Residues 126–145 (SPGTTNPSTGNSTNSTLPTN) are compositionally biased toward low complexity. Polar residues predominate over residues 146 to 155 (DKPTSSTITF). Residues 156 to 170 (PDSTTMGPSSSTSGD) are compositionally biased toward low complexity. N172 is lipidated: GPI-anchor amidated asparagine. Positions 173-197 (GGEELSVRTTTIILLTTIAAVALRV) are cleaved as a propeptide — removed in mature form.

Expressed in the sieve elements.

Its subcellular location is the cell membrane. The chain is Carbohydrate-binding X8 domain-containing protein from Arabidopsis thaliana (Mouse-ear cress).